Reading from the N-terminus, the 1164-residue chain is MKKNTDSEMDQRLGYKFLVPDPKAGVFYRPLHFQYVSYSNFILHRLHEILTVKRPLLSFKNNTERIMIEISNVKVTPPDYSPIIASIKGKSYDALATFTVNIFKEVMTKEGISITKISSYEGKDSHLIKIPLLIGYGNKNPLDTAKYLVPNVIGGVFINKQSVEKVGINLVEKITTWPKFRVVKPNSFTFSFSSVSPPNVLPTRYRHYKISLDISQLEASNISSTKTFITVNIVLLSQYLSRVSLEFIRRSLSYDMPPEVVYLVNAIIDSAKRLTESITDFNIDTYINDLVEAEHIKQKSQLTINEFKYEMLHNFLPHMNYTPDQLKGFYMISLLRKFLYCIYHTSRYPDRDSMVCHRILTYGKYFETLAHDELENYIGNIRNDIMNNHKNRGTYAVNIHVLTTPGLNHAFSSLLSGKFKKSDGSYRTHPHYSWMQNISIPRSVGFYPDQVKISKMFSVRKYHPSQYLYFCSSDVPERGPQVGLVSQLSVLSSITNILTSEYLDLEKKICEYIRSYYKDDISYFETGFPITIENALVASLNPNMICDFVTDFRRRKRMGFFGNLEVGITLVRDHMNEIRINIGAGRLVRPFLVVDNGELMMDVCPELESRLDDMTFSDIQKEFPHVIEMVDIEQFTFSNVCESVQKFRMMSKDERKQYDLCDFPAEFRDGYVASSLVGINHNSGPRAILGCAQAKQAISCLSSDIRNKIDNGIHLMYPERPIVISKALETSKIAANCFGQHVTIALMSYKGINQEDGIIIKKQFIQRGGLDIVTAKKHQVEIPLENFNNKERDRSNAYSKLESNGLVRLNAFLESGDAMARNISSRTLEDDFARDNQISFDVSEKYTDMYKSRVERVQVELTDKVKVRVLTMKERRPILGDKFTTRTSQKGTVAYIADETELPYDENGITPDVIINSTSIFSRKTISMLIEVILTAAYSTKPYNNKGENRPVCFPSSNETSIDAYMQFAKQCYEYSNPKLSEEELSDKIFCEKILYDPETDKPYESKVFFGPIYYLRLRHLTQDKATVRCRGKKTKLIRQANEGRKRGGGIKFGEMERDCLIAHGAANTITEVLKDSEEDYQDVYICENCGDIAAQIKSINTCLRCSKLNLSPLLTKIDTTHVSKVFLTQMNARGVKVKLDFERRPPSFYKPLDKVDLKPSFLV.

The protein belongs to the RNA polymerase beta chain family. As to quaternary structure, the DNA-dependent RNA polymerase used for intermediate and late genes expression consists of eight subunits 147 kDa, 133 kDa, 35 kDa, 30 kDa, 22 kDa, 19 kDa, 18 kDa and 7 kDa totalling more than 500 kDa in mass. The same holoenzyme, with the addition of the transcription-specificity factor RAP94, is used for early gene expression.

It localises to the virion. It catalyses the reaction RNA(n) + a ribonucleoside 5'-triphosphate = RNA(n+1) + diphosphate. Its function is as follows. Part of the DNA-dependent RNA polymerase which catalyzes the transcription of viral DNA into RNA using the four ribonucleoside triphosphates as substrates. Responsible for the transcription of early, intermediate and late genes. DNA-dependent RNA polymerase associates with the early transcription factor (ETF), itself composed of OPG118 and OPG133, thereby allowing the early genes transcription. Late transcription, and probably also intermediate transcription, require newly synthesized RNA polymerase. This is DNA-directed RNA polymerase (OPG151) from Monkeypox virus.